The primary structure comprises 346 residues: UDP-3-O-acylglucosamine N-acyltransferase (346 aa).

The active-site Proton acceptor is the His253.

The protein belongs to the transferase hexapeptide repeat family. LpxD subfamily. In terms of assembly, homotrimer.

The catalysed reaction is a UDP-3-O-[(3R)-3-hydroxyacyl]-alpha-D-glucosamine + a (3R)-hydroxyacyl-[ACP] = a UDP-2-N,3-O-bis[(3R)-3-hydroxyacyl]-alpha-D-glucosamine + holo-[ACP] + H(+). It functions in the pathway bacterial outer membrane biogenesis; LPS lipid A biosynthesis. In terms of biological role, catalyzes the N-acylation of UDP-3-O-acylglucosamine using 3-hydroxyacyl-ACP as the acyl donor. Is involved in the biosynthesis of lipid A, a phosphorylated glycolipid that anchors the lipopolysaccharide to the outer membrane of the cell. In Rickettsia akari (strain Hartford), this protein is UDP-3-O-acylglucosamine N-acyltransferase.